A 94-amino-acid polypeptide reads, in one-letter code: Large ribosomal subunit protein uL23 (94 aa).

The protein belongs to the universal ribosomal protein uL23 family. In terms of assembly, part of the 50S ribosomal subunit. Contacts protein L29, and trigger factor when it is bound to the ribosome.

Functionally, one of the early assembly proteins it binds 23S rRNA. One of the proteins that surrounds the polypeptide exit tunnel on the outside of the ribosome. Forms the main docking site for trigger factor binding to the ribosome. This chain is Large ribosomal subunit protein uL23, found in Ligilactobacillus salivarius (strain UCC118) (Lactobacillus salivarius).